A 2774-amino-acid polypeptide reads, in one-letter code: Teneurin-2 (2774 aa).

The Teneurin N-terminal domain maps to 1-375 (MDVKDRRHRS…KPSKYCSWKC (375 aa)). At 1–379 (MDVKDRRHRS…YCSWKCAALS (379 aa)) the chain is on the cytoplasmic side. A phosphoserine mark is found at Ser-90 and Ser-124. The tract at residues 111–271 (TGSDADSDTE…HHHSSANSLN (161 aa)) is disordered. Residues 141 to 155 (SSGLSSRENSALTLT) are compositionally biased toward polar residues. Phosphothreonine is present on Thr-155. At Ser-157 the chain carries Phosphoserine. The span at 159–168 (NENKSDDENG) shows a compositional bias: basic and acidic residues. Residues 176-188 (SPSLLPSAQLPSS) show a composition bias toward low complexity. The segment covering 202–211 (DSNTSHQIMD) has biased composition (polar residues). Over residues 229–240 (SGPQQASSSGPP) the composition is skewed to low complexity. The chain crosses the membrane as a helical span at residues 380 to 400 (AIAAALLLAILLAYFIAMHLL). Over 401–2774 (GLNWQLQPAD…FLRQNEMGKR (2374 aa)) the chain is Extracellular. 2 N-linked (GlcNAc...) asparagine glycosylation sites follow: Asn-443 and Asn-482. 8 consecutive EGF-like domains span residues 575–603 (DCPR…ADCA), 598–634 (LGAD…AECD), 636–668 (PMNQ…EHCE), 669–701 (EVDC…NCEL), 702–735 (ARVQ…PDCS), 738–766 (VCSV…AACD), 769–797 (VCHP…EHCT), and 808–841 (DGCP…PGCN). 22 disulfide bridges follow: Cys-576/Cys-586, Cys-580/Cys-591, Cys-593/Cys-602, Cys-611/Cys-622, Cys-624/Cys-633, Cys-640/Cys-651, Cys-645/Cys-656, Cys-658/Cys-667, Cys-672/Cys-683, Cys-677/Cys-688, Cys-690/Cys-699, Cys-710/Cys-723, Cys-725/Cys-734, Cys-739/Cys-749, Cys-743/Cys-754, Cys-756/Cys-765, Cys-770/Cys-780, Cys-774/Cys-785, Cys-787/Cys-796, Cys-810/Cys-820, Cys-814/Cys-829, and Cys-831/Cys-840. Residues Asn-925, Asn-948, and Asn-1267 are each glycosylated (N-linked (GlcNAc...) asparagine). NHL repeat units lie at residues 1272–1316 (LELR…VKSL), 1342–1386 (ARCG…NGII), 1401–1452 (LSCD…IAGR), 1474–1501 (LESA…INRL), and 1530–1573 (CYSG…VSKN). The YD 1 repeat unit spans residues 1583–1602 (YEAASPGEQELYVFNADGIH). An N-linked (GlcNAc...) asparagine glycan is attached at Asn-1616. YD repeat units follow at residues 1619 to 1639 (YSTD…LKIR), 1682 to 1701 (YDGN…WTTF), and 1702 to 1724 (YDYD…TSLH). Residues Asn-1712, Asn-1749, Asn-1773, Asn-1807, and Asn-1892 are each glycosylated (N-linked (GlcNAc...) asparagine). 18 YD repeats span residues 1895 to 1914 (YFFN…ERTD), 1936 to 1954 (YLDK…YIFE), 1955 to 1975 (YDSS…HSMS), 1982 to 1999 (YIRN…VIFD), 2000 to 2021 (YSDD…VFYK), 2022 to 2039 (YGKL…TAVT), 2042 to 2062 (YDET…FSCT), 2065 to 2085 (YRKI…EGMV), 2093 to 2113 (YHDN…TPLP), 2119 to 2136 (YDEI…GVIY), 2137 to 2163 (YDIN…IKEV), 2165 to 2178 (YEMF…MTVQ), 2179 to 2202 (YDSM…TKYT), 2205 to 2225 (YDGD…WRYS), 2226 to 2246 (YDLN…LMPL), 2248 to 2268 (YDLR…DDDG), 2280 to 2300 (YNSK…SVQY), and 2302 to 2322 (YDGV…LQYF). Asn-1993 is a glycosylation site (N-linked (GlcNAc...) asparagine). Asn-2197 is a glycosylation site (N-linked (GlcNAc...) asparagine). Asn-2337 carries an N-linked (GlcNAc...) asparagine glycan. A YD 23 repeat occupies 2348–2389 (YDLQGHLFAMESSSGEEYYVASDNTGTPLAVFSINGLMIKQL). Asn-2648 carries N-linked (GlcNAc...) asparagine glycosylation.

The protein belongs to the tenascin family. Teneurin subfamily. In terms of assembly, homodimer; disulfide-linked. Heterodimer with either TENM1 or TENM3. May also form heterodimer with TENM4. Isoform 2 (C-terminal globular domain) interacts with ADGRL1 isoform 2. In terms of processing, derives from the membrane form by proteolytic processing. Post-translationally, derives from the plasma membrane form by proteolytic cleavage and translocates to the nucleus. Homophilic binding of the C-terminal extracellular domain stimulates its proteolytic cleavage and release in the cytoplasmic. Is subjected to rapid degradation by the proteasome pathway. Highly expressed in heart, followed by brain, liver, kidney and fetal brain and weakly expressed in lung and testis. No expression was detected in skeletal muscle, pancreas, spleen, ovary and fetal liver.

Its subcellular location is the cell membrane. It localises to the presynaptic cell membrane. It is found in the postsynaptic cell membrane. The protein localises to the endoplasmic reticulum. The protein resides in the golgi apparatus. Its subcellular location is the synapse. It localises to the cell projection. It is found in the dendritic spine. The protein localises to the filopodium. The protein resides in the growth cone. Its subcellular location is the nucleus. It localises to the PML body. Its function is as follows. Involved in neural development, regulating the establishment of proper connectivity within the nervous system. Acts as a ligand of the ADGRL1 and ADGRL3 receptors that are expressed at the surface of adjacent cells. Promotes the formation of filopodia and enlarged growth cone in neuronal cells. Mediates axon guidance and homophilic and heterophilic cell-cell adhesion. May function as a cellular signal transducer. In terms of biological role, acts as a ligand of the ADGRL1 receptor. Mediates axon guidance and heterophilic cell-cell adhesion. Induces gene transcription inhibition. This chain is Teneurin-2 (TENM2), found in Homo sapiens (Human).